The following is a 485-amino-acid chain: MTNKVRTRFAPSPTGYMHVGNLRTALYAYLIAKHDNGDFILRIEDTDQERLVEGALDVIYNTLKITGLSHDEGPDIGGPVGPYVQSERRNIYIEYAEKLIEKGEAYYCFCSKERLDMLRANSEALKRPFRYDKHCIDLSKEEIDKKIAEGVPYVIRQKNPTTGSTSFHDEIYGDISVDNSELDDMILIKSDGLPTYNFANVVDDHLMGITHVVRGSEYLSSSPKYNRLYEAFGWDVPIYVHCPPIMKDEHHKLSKRNGDASFEDLMAKGYLKEAILNYIALLGWNPGGEKEVFSMKELIEAFNYRNINKAPAVFDTKKLKWMNGEYIRALSLDKFHEMALPHYKEALTRDLDTKKISELLHTRVEVLNEIPEQLDFFNNLLEYSPEMYIHKKMKTTYENSLKSLEEVLPRLEALENWTFENIKEVCMNLVKELEVKNGVVLWPIRTAVSGKQFTPGGAFEIADILGKEETLERIKIGINKLKALQ.

A 'HIGH' region motif is present at residues 11–21; that stretch reads PSPTGYMHVGN. Positions 108, 110, 135, and 137 each coordinate Zn(2+). The short motif at 252–256 is the 'KMSKS' region element; it reads KLSKR. Residue Lys255 participates in ATP binding.

Belongs to the class-I aminoacyl-tRNA synthetase family. Glutamate--tRNA ligase type 1 subfamily. As to quaternary structure, monomer. Zn(2+) serves as cofactor.

Its subcellular location is the cytoplasm. The catalysed reaction is tRNA(Glu) + L-glutamate + ATP = L-glutamyl-tRNA(Glu) + AMP + diphosphate. Catalyzes the attachment of glutamate to tRNA(Glu) in a two-step reaction: glutamate is first activated by ATP to form Glu-AMP and then transferred to the acceptor end of tRNA(Glu). This Clostridium botulinum (strain Loch Maree / Type A3) protein is Glutamate--tRNA ligase.